The following is an 81-amino-acid chain: Large ribosomal subunit protein bL31B (81 aa).

This sequence belongs to the bacterial ribosomal protein bL31 family. Type B subfamily. As to quaternary structure, part of the 50S ribosomal subunit.

The chain is Large ribosomal subunit protein bL31B from Bacillus anthracis (strain A0248).